The sequence spans 432 residues: Ornithine aminotransferase, mitochondrial (432 aa).

Lys-287 carries the post-translational modification N6-(pyridoxal phosphate)lysine.

It belongs to the class-III pyridoxal-phosphate-dependent aminotransferase family. In terms of assembly, homotetramer. Requires pyridoxal 5'-phosphate as cofactor.

It is found in the mitochondrion matrix. The enzyme catalyses a 2-oxocarboxylate + L-ornithine = L-glutamate 5-semialdehyde + an L-alpha-amino acid. The protein operates within amino-acid biosynthesis; L-proline biosynthesis; L-glutamate 5-semialdehyde from L-ornithine: step 1/1. This is Ornithine aminotransferase, mitochondrial (Oat) from Drosophila ananassae (Fruit fly).